We begin with the raw amino-acid sequence, 160 residues long: Ribosomal RNA large subunit methyltransferase H (160 aa).

Residues Leu-77, Gly-109, and 128-133 (LSNLTF) contribute to the S-adenosyl-L-methionine site.

The protein belongs to the RNA methyltransferase RlmH family. In terms of assembly, homodimer.

It is found in the cytoplasm. The catalysed reaction is pseudouridine(1915) in 23S rRNA + S-adenosyl-L-methionine = N(3)-methylpseudouridine(1915) in 23S rRNA + S-adenosyl-L-homocysteine + H(+). Functionally, specifically methylates the pseudouridine at position 1915 (m3Psi1915) in 23S rRNA. The chain is Ribosomal RNA large subunit methyltransferase H from Desulforamulus reducens (strain ATCC BAA-1160 / DSM 100696 / MI-1) (Desulfotomaculum reducens).